A 229-amino-acid chain; its full sequence is Guanylate kinase (229 aa).

In terms of domain architecture, RPE1 insert spans 7-42 (RVLQKCAYREEFKGDMERSTAATSKLPLEVELSRNS). The Guanylate kinase-like domain occupies 44 to 222 (GLIIILSSPS…TLKKIHAIIV (179 aa)). 51 to 58 (SPSGTGKS) lines the ATP pocket.

It belongs to the guanylate kinase family.

It is found in the cytoplasm. It carries out the reaction GMP + ATP = GDP + ADP. Functionally, essential for recycling GMP and indirectly, cGMP. The chain is Guanylate kinase (gmk) from Rickettsia conorii (strain ATCC VR-613 / Malish 7).